Here is a 269-residue protein sequence, read N- to C-terminus: Phosphate import ATP-binding protein PstB (269 aa).

An ABC transporter domain is found at 21-264 (SEVRNLSFYY…PKNKQTEDYI (244 aa)). 53–60 (GPSGCGKS) lines the ATP pocket.

The protein belongs to the ABC transporter superfamily. Phosphate importer (TC 3.A.1.7) family. As to quaternary structure, the complex is composed of two ATP-binding proteins (PstB), two transmembrane proteins (PstC and PstA) and a solute-binding protein (PstS).

The protein localises to the cell inner membrane. The enzyme catalyses phosphate(out) + ATP + H2O = ADP + 2 phosphate(in) + H(+). Its function is as follows. Part of the ABC transporter complex PstSACB involved in phosphate import. Responsible for energy coupling to the transport system. This chain is Phosphate import ATP-binding protein PstB, found in Nitrosospira multiformis (strain ATCC 25196 / NCIMB 11849 / C 71).